The following is a 353-amino-acid chain: Guanine nucleotide-binding protein subunit alpha (353 aa).

The tract at residues 1-25 (MGCGMSTEDKEGKARNEEIENQLKR) is disordered. A lipid anchor (N-myristoyl glycine) is attached at Gly2. Cys3 carries S-palmitoyl cysteine lipidation. Over residues 7 to 25 (TEDKEGKARNEEIENQLKR) the composition is skewed to basic and acidic residues. Positions 32 to 353 (NEIKMLLLGA…QENLRLCGLI (322 aa)) constitute a G-alpha domain. A G1 motif region spans residues 35-48 (KMLLLGAGESGKST). Residues Glu43, Ser44, Gly45, Lys46, Ser47, Thr48, Asp150, Leu175, Thr181, Gly203, Asn269, Lys270, Asp272, and Ala325 each coordinate GTP. A Mg(2+)-binding site is contributed by Ser47. Residues 173-181 (DVLRSRVKT) form a G2 motif region. Residue Thr181 participates in Mg(2+) binding. The tract at residues 196-205 (YRMFDVGGQR) is G3 motif. Positions 265-272 (ILFLNKID) are G4 motif. A G5 motif region spans residues 323 to 328 (TCATDT).

Belongs to the G-alpha family. G(q) subfamily. In terms of assembly, g proteins are composed of 3 units; alpha, beta and gamma. The alpha chain contains the guanine nucleotide binding site. It depends on Mg(2+) as a cofactor.

Guanine nucleotide-binding proteins (G proteins) are involved as modulators or transducers in various transmembrane signaling systems. The chain is Guanine nucleotide-binding protein subunit alpha (fadA) from Emericella nidulans (strain FGSC A4 / ATCC 38163 / CBS 112.46 / NRRL 194 / M139) (Aspergillus nidulans).